A 36-amino-acid polypeptide reads, in one-letter code: Photosystem I reaction center subunit VIII (36 aa).

The helical transmembrane segment at 4–24 threads the bilayer; that stretch reads FSLPSILVPLVGLVLPAIAMA.

Belongs to the PsaI family.

It localises to the plastid. The protein localises to the chloroplast thylakoid membrane. May help in the organization of the PsaL subunit. The protein is Photosystem I reaction center subunit VIII of Piper cenocladum (Ant piper).